The primary structure comprises 218 residues: Adenylate kinase (218 aa).

10–15 (GAGKGT) lines the ATP pocket. Residues 30 to 59 (STGDMLRAAVKQGTPLGQEAKKVMDAGGLV) are NMP. AMP-binding positions include threonine 31, arginine 36, 57 to 59 (GLV), 85 to 88 (GFPR), and glutamine 92. An LID region spans residues 122-159 (GRRVHPASGRSYHVRFNPPKQEGLDDVTGEPLVQRDDD). ATP-binding positions include arginine 123 and 132-133 (SY). AMP is bound by residues arginine 156 and arginine 167. Residue glycine 203 participates in ATP binding.

It belongs to the adenylate kinase family. In terms of assembly, monomer.

The protein resides in the cytoplasm. It catalyses the reaction AMP + ATP = 2 ADP. The protein operates within purine metabolism; AMP biosynthesis via salvage pathway; AMP from ADP: step 1/1. Catalyzes the reversible transfer of the terminal phosphate group between ATP and AMP. Plays an important role in cellular energy homeostasis and in adenine nucleotide metabolism. This Bordetella petrii (strain ATCC BAA-461 / DSM 12804 / CCUG 43448) protein is Adenylate kinase.